A 316-amino-acid polypeptide reads, in one-letter code: Porphobilinogen deaminase (316 aa).

Position 245 is an S-(dipyrrolylmethanemethyl)cysteine (Cys-245).

The protein belongs to the HMBS family. Monomer. Dipyrromethane serves as cofactor.

The enzyme catalyses 4 porphobilinogen + H2O = hydroxymethylbilane + 4 NH4(+). It participates in porphyrin-containing compound metabolism; protoporphyrin-IX biosynthesis; coproporphyrinogen-III from 5-aminolevulinate: step 2/4. It functions in the pathway porphyrin-containing compound metabolism; chlorophyll biosynthesis. Its function is as follows. Tetrapolymerization of the monopyrrole PBG into the hydroxymethylbilane pre-uroporphyrinogen in several discrete steps. The polypeptide is Porphobilinogen deaminase (Prochlorococcus marinus (strain MIT 9515)).